Consider the following 281-residue polypeptide: Ribosomal RNA small subunit methyltransferase I (281 aa).

Belongs to the methyltransferase superfamily. RsmI family.

The protein resides in the cytoplasm. It carries out the reaction cytidine(1402) in 16S rRNA + S-adenosyl-L-methionine = 2'-O-methylcytidine(1402) in 16S rRNA + S-adenosyl-L-homocysteine + H(+). Its function is as follows. Catalyzes the 2'-O-methylation of the ribose of cytidine 1402 (C1402) in 16S rRNA. This chain is Ribosomal RNA small subunit methyltransferase I, found in Erythrobacter litoralis (strain HTCC2594).